The sequence spans 786 residues: Signal transducer and activator of transcription 5B (786 aa).

Residue Y90 is modified to Phosphotyrosine. Residue S128 is modified to Phosphoserine. One can recognise an SH2 domain in the interval 589–686 (WNDGAILGFV…EVYSKYYTPV (98 aa)). Phosphotyrosine is present on residues Y682 and Y699.

It belongs to the transcription factor STAT family. Upon activation, forms a homodimer or a heterodimer with a related family member. Binds NR3C1. Interacts with NCOA1. Interacts with NMI. Interacts with SOCS7. Interacts (via SH2 domain) with INSR. Interacts with CPEB3; this inhibits STAT5B-mediated transcriptional activation. Tyrosine phosphorylated in response to signaling via activated KIT, resulting in translocation to the nucleus. Tyrosine phosphorylated in response to signaling via activated FLT3; wild-type FLT3 results in much weaker phosphorylation than constitutively activated mutant FLT3. Alternatively, can be phosphorylated by JAK2. Phosphorylation at Tyr-699 by PTK6 or HCK leads to an increase of its transcriptional activity.

It localises to the cytoplasm. Its subcellular location is the nucleus. Functionally, carries out a dual function: signal transduction and activation of transcription. Mediates cellular responses to the cytokine KITLG/SCF and other growth factors. Binds to the GAS element and activates PRL-induced transcription. Positively regulates hematopoietic/erythroid differentiation. The polypeptide is Signal transducer and activator of transcription 5B (Stat5b) (Rattus norvegicus (Rat)).